A 235-amino-acid polypeptide reads, in one-letter code: Large ribosomal subunit protein uL1 (235 aa).

It belongs to the universal ribosomal protein uL1 family. In terms of assembly, part of the 50S ribosomal subunit.

Binds directly to 23S rRNA. The L1 stalk is quite mobile in the ribosome, and is involved in E site tRNA release. Functionally, protein L1 is also a translational repressor protein, it controls the translation of the L11 operon by binding to its mRNA. In Prochlorococcus marinus (strain AS9601), this protein is Large ribosomal subunit protein uL1.